We begin with the raw amino-acid sequence, 138 residues long: Small ribosomal subunit protein uS12 (138 aa).

A disordered region spans residues 33–55 (KEHTNVSSPQKRGVCTRVGTMTP). Aspartate 102 carries the post-translational modification 3-methylthioaspartic acid.

Belongs to the universal ribosomal protein uS12 family. Part of the 30S ribosomal subunit. Contacts proteins S8 and S17. May interact with IF1 in the 30S initiation complex.

In terms of biological role, with S4 and S5 plays an important role in translational accuracy. Its function is as follows. Interacts with and stabilizes bases of the 16S rRNA that are involved in tRNA selection in the A site and with the mRNA backbone. Located at the interface of the 30S and 50S subunits, it traverses the body of the 30S subunit contacting proteins on the other side and probably holding the rRNA structure together. The combined cluster of proteins S8, S12 and S17 appears to hold together the shoulder and platform of the 30S subunit. In Bacillus velezensis (strain DSM 23117 / BGSC 10A6 / LMG 26770 / FZB42) (Bacillus amyloliquefaciens subsp. plantarum), this protein is Small ribosomal subunit protein uS12.